We begin with the raw amino-acid sequence, 368 residues long: Phosphoserine aminotransferase (368 aa).

Residue arginine 42 coordinates L-glutamate. Pyridoxal 5'-phosphate contacts are provided by tryptophan 101, threonine 151, aspartate 175, and glutamine 198. Lysine 199 carries the post-translational modification N6-(pyridoxal phosphate)lysine. 240-241 (NT) is a pyridoxal 5'-phosphate binding site.

The protein belongs to the class-V pyridoxal-phosphate-dependent aminotransferase family. SerC subfamily. As to quaternary structure, homodimer. Pyridoxal 5'-phosphate serves as cofactor.

It localises to the cytoplasm. The enzyme catalyses O-phospho-L-serine + 2-oxoglutarate = 3-phosphooxypyruvate + L-glutamate. It carries out the reaction 4-(phosphooxy)-L-threonine + 2-oxoglutarate = (R)-3-hydroxy-2-oxo-4-phosphooxybutanoate + L-glutamate. Its pathway is amino-acid biosynthesis; L-serine biosynthesis; L-serine from 3-phospho-D-glycerate: step 2/3. It functions in the pathway cofactor biosynthesis; pyridoxine 5'-phosphate biosynthesis; pyridoxine 5'-phosphate from D-erythrose 4-phosphate: step 3/5. Catalyzes the reversible conversion of 3-phosphohydroxypyruvate to phosphoserine and of 3-hydroxy-2-oxo-4-phosphonooxybutanoate to phosphohydroxythreonine. This Polaromonas sp. (strain JS666 / ATCC BAA-500) protein is Phosphoserine aminotransferase.